A 360-amino-acid chain; its full sequence is Photosystem II protein D1 (360 aa).

3 consecutive transmembrane segments (helical) span residues 30–47, 119–134, and 143–157; these read YVGWFGVLMIPCLLAAAA, HFLIGISAYMGRQWEL, and WICVAYSAPVSAAFA. Position 119 (histidine 119) interacts with chlorophyll a. Pheophytin a is bound at residue tyrosine 127. Residues aspartate 171 and glutamate 190 each coordinate [CaMn4O5] cluster. A helical transmembrane segment spans residues 198-219; that stretch reads FHMAGVAGMFGGSLFSAMHGSL. Residue histidine 199 coordinates chlorophyll a. Residues histidine 216 and 265-266 each bind a quinone; that span reads SF. Histidine 216 serves as a coordination point for Fe cation. Histidine 273 serves as a coordination point for Fe cation. Residues 275–289 form a helical membrane-spanning segment; it reads FLAVFPVVCVWLTSM. Residues histidine 333, glutamate 334, aspartate 343, and alanine 345 each contribute to the [CaMn4O5] cluster site. The propeptide occupies 346 to 360; it reads AAESTTVALTAPAIG.

It belongs to the reaction center PufL/M/PsbA/D family. As to quaternary structure, PSII is composed of 1 copy each of membrane proteins PsbA, PsbB, PsbC, PsbD, PsbE, PsbF, PsbH, PsbI, PsbJ, PsbK, PsbL, PsbM, PsbT, PsbX, PsbY, Psb30/Ycf12, peripheral proteins PsbO, CyanoQ (PsbQ), PsbU, PsbV and a large number of cofactors. It forms dimeric complexes. The cofactor is The D1/D2 heterodimer binds P680, chlorophylls that are the primary electron donor of PSII, and subsequent electron acceptors. It shares a non-heme iron and each subunit binds pheophytin, quinone, additional chlorophylls, carotenoids and lipids. D1 provides most of the ligands for the Mn4-Ca-O5 cluster of the oxygen-evolving complex (OEC). There is also a Cl(-1) ion associated with D1 and D2, which is required for oxygen evolution. The PSII complex binds additional chlorophylls, carotenoids and specific lipids.. In terms of processing, tyr-162 forms a radical intermediate that is referred to as redox-active TyrZ, YZ or Y-Z. C-terminally processed by CtpA; processing is essential to allow assembly of the oxygen-evolving complex and thus photosynthetic growth.

It localises to the cellular thylakoid membrane. The catalysed reaction is 2 a plastoquinone + 4 hnu + 2 H2O = 2 a plastoquinol + O2. Photosystem II (PSII) is a light-driven water:plastoquinone oxidoreductase that uses light energy to abstract electrons from H(2)O, generating O(2) and a proton gradient subsequently used for ATP formation. It consists of a core antenna complex that captures photons, and an electron transfer chain that converts photonic excitation into a charge separation. The D1/D2 (PsbA/PsbD) reaction center heterodimer binds P680, the primary electron donor of PSII as well as several subsequent electron acceptors. This is Photosystem II protein D1 from Prochlorococcus marinus (strain MIT 9515).